The primary structure comprises 390 residues: RNA polymerase sigma factor SigA (390 aa).

Residues 48 to 57 (FLEPQTDEDD) are compositionally biased toward acidic residues. The disordered stretch occupies residues 48-75 (FLEPQTDEDDAKSGKAAKSRRRTQSKKK). A compositionally biased stretch (basic residues) spans 62 to 75 (KAAKSRRRTQSKKK). The segment at 158–228 (MVQSNLRLVV…TRAIADQSRT (71 aa)) is sigma-70 factor domain-2. The Interaction with polymerase core subunit RpoC signature appears at 182-185 (DLIQ). The sigma-70 factor domain-3 stretch occupies residues 237-312 (ETISRIKKTT…ESDGETPEDQ (76 aa)). A sigma-70 factor domain-4 region spans residues 325 to 378 (VLDSLSPRERDVLRLRYGLDDGRMKTLEEIGQIFNVTRERIRQIEAKALRKLRH). Positions 351 to 370 (LEEIGQIFNVTRERIRQIEA) form a DNA-binding region, H-T-H motif.

This sequence belongs to the sigma-70 factor family. RpoD/SigA subfamily. Interacts transiently with the RNA polymerase catalytic core.

It is found in the cytoplasm. In terms of biological role, sigma factors are initiation factors that promote the attachment of RNA polymerase to specific initiation sites and are then released. This sigma factor is the primary sigma factor during exponential growth. The protein is RNA polymerase sigma factor SigA of Nostoc sp. (strain PCC 7120 / SAG 25.82 / UTEX 2576).